Here is a 637-residue protein sequence, read N- to C-terminus: Serine/threonine protein kinase ypkA (637 aa).

The span at 20-29 (TFTRSSSTST) shows a compositional bias: low complexity. 2 disordered regions span residues 20–63 (TFTR…SLVS) and 104–140 (SSSV…INAA). Residues 40-61 (VVSQTPSISSTNSNGINASESL) show a composition bias toward polar residues. The segment covering 104-116 (SSSVRPSSSSSHS) has biased composition (low complexity). Over residues 117–136 (THGQTASFAQSGRPQSTSGG) the composition is skewed to polar residues. The 258-residue stretch at 294–551 (FDLLKVVGKG…AAEIKSHHFF (258 aa)) folds into the Protein kinase domain. Residues 300 to 308 (VGKGSFGKV) and Lys-323 each bind ATP. Catalysis depends on Asp-417, which acts as the Proton acceptor. In terms of domain architecture, AGC-kinase C-terminal spans 552–623 (ANIDWRKLLQ…NRPVAGLGDA (72 aa)). Phosphoserine occurs at positions 593 and 612. At Tyr-613 the chain carries Phosphotyrosine.

This sequence belongs to the protein kinase superfamily. Ser/Thr protein kinase family. As to quaternary structure, interacts with the sakA MAP kinase.

The catalysed reaction is L-seryl-[protein] + ATP = O-phospho-L-seryl-[protein] + ADP + H(+). The enzyme catalyses L-threonyl-[protein] + ATP = O-phospho-L-threonyl-[protein] + ADP + H(+). Functionally, serine/threonine protein kinase required for vegetative growth and conidiation. Important for fungal survival through the regulation of glycosphingolipid (GSL) biosynthesis and cross talks with MAP kinase pathways such as the cell wall integrity (CWI) and the high osmolarity glycerol (HOG) pathways. This is Serine/threonine protein kinase ypkA from Aspergillus fumigatus (strain ATCC MYA-4609 / CBS 101355 / FGSC A1100 / Af293) (Neosartorya fumigata).